Consider the following 362-residue polypeptide: Heme A synthase (362 aa).

A run of 5 helical transmembrane segments spans residues 10-30 (LAAIRIWLTVVAGLIALMVLV), 102-122 (VIGMVYLLPFLWFLWRGAVSG), 128-148 (LWLIFGLGALQGAVGWWMVAS), 159-179 (VRLATHLSLALLIFAAIVWTL), and 198-218 (AWGLVGVTFVQLYLGALVAGL). Heme is bound at residue H262. 3 consecutive transmembrane segments (helical) span residues 266 to 286 (AYTLFLLGAWHAFDVMRAGAG), 297 to 317 (LAAILVQAGLGIATLLMVVPI), and 318 to 338 (SLALLHQGTAIIVLTFAVLQA). Residue H323 coordinates heme.

The protein belongs to the COX15/CtaA family. Type 2 subfamily. In terms of assembly, interacts with CtaB. Requires heme b as cofactor.

It localises to the cell membrane. It carries out the reaction Fe(II)-heme o + 2 A + H2O = Fe(II)-heme a + 2 AH2. The protein operates within porphyrin-containing compound metabolism; heme A biosynthesis; heme A from heme O: step 1/1. Functionally, catalyzes the conversion of heme O to heme A by two successive hydroxylations of the methyl group at C8. The first hydroxylation forms heme I, the second hydroxylation results in an unstable dihydroxymethyl group, which spontaneously dehydrates, resulting in the formyl group of heme A. This is Heme A synthase from Bradyrhizobium sp. (strain BTAi1 / ATCC BAA-1182).